Reading from the N-terminus, the 634-residue chain is Tyrosine-protein kinase transforming protein erbB (634 aa).

The region spanning 132-399 (FKKVKVLGSG…KMARDPPRYL (268 aa)) is the Protein kinase domain. ATP-binding positions include 138–146 (LGSGAFGTV) and K165. The active-site Proton acceptor is the D257.

This sequence belongs to the protein kinase superfamily. Tyr protein kinase family. EGF receptor subfamily.

The catalysed reaction is L-tyrosyl-[protein] + ATP = O-phospho-L-tyrosyl-[protein] + ADP + H(+). The polypeptide is Tyrosine-protein kinase transforming protein erbB (V-ERBB) (Avian leukosis virus (ALV)).